Here is a 280-residue protein sequence, read N- to C-terminus: 4-diphosphocytidyl-2-C-methyl-D-erythritol kinase (280 aa).

Residue lysine 8 is part of the active site. 91-101 lines the ATP pocket; it reads PVAAGLAGGST. Aspartate 133 is an active-site residue.

It belongs to the GHMP kinase family. IspE subfamily.

The catalysed reaction is 4-CDP-2-C-methyl-D-erythritol + ATP = 4-CDP-2-C-methyl-D-erythritol 2-phosphate + ADP + H(+). It participates in isoprenoid biosynthesis; isopentenyl diphosphate biosynthesis via DXP pathway; isopentenyl diphosphate from 1-deoxy-D-xylulose 5-phosphate: step 3/6. In terms of biological role, catalyzes the phosphorylation of the position 2 hydroxy group of 4-diphosphocytidyl-2C-methyl-D-erythritol. This is 4-diphosphocytidyl-2-C-methyl-D-erythritol kinase from Clostridium botulinum (strain Loch Maree / Type A3).